A 246-amino-acid chain; its full sequence is 3-deoxy-manno-octulosonate cytidylyltransferase (246 aa).

Belongs to the KdsB family. As to quaternary structure, homodimer.

It is found in the cytoplasm. The catalysed reaction is 3-deoxy-alpha-D-manno-oct-2-ulosonate + CTP = CMP-3-deoxy-beta-D-manno-octulosonate + diphosphate. The protein operates within nucleotide-sugar biosynthesis; CMP-3-deoxy-D-manno-octulosonate biosynthesis; CMP-3-deoxy-D-manno-octulosonate from 3-deoxy-D-manno-octulosonate and CTP: step 1/1. It functions in the pathway bacterial outer membrane biogenesis; lipopolysaccharide biosynthesis. In terms of biological role, activates KDO (a required 8-carbon sugar) for incorporation into bacterial lipopolysaccharide in Gram-negative bacteria. The sequence is that of 3-deoxy-manno-octulosonate cytidylyltransferase (kpsU) from Escherichia coli.